The following is a 279-amino-acid chain: Putative hydro-lyase GDI0188/Gdia_2258 (279 aa).

This sequence belongs to the D-glutamate cyclase family.

In Gluconacetobacter diazotrophicus (strain ATCC 49037 / DSM 5601 / CCUG 37298 / CIP 103539 / LMG 7603 / PAl5), this protein is Putative hydro-lyase GDI0188/Gdia_2258.